Consider the following 487-residue polypeptide: uncharacterized protein (487 aa).

This is an uncharacterized protein from Bacillus subtilis (strain 168).